A 229-amino-acid polypeptide reads, in one-letter code: Histone H3-like centromeric protein CSE4 (229 aa).

A compositionally biased stretch (polar residues) spans M1–N35. The interval M1–A78 is disordered. A compositionally biased stretch (basic and acidic residues) spans P53–L68. Residues K115–Y132 carry the Nuclear localization signal motif. Residues Y132–I229 are H3-like.

The protein belongs to the histone H3 family. In terms of assembly, component of centromeric nucleosomes, where DNA is wrapped around a histone octamer core. The octamer contains two molecules each of H2A, H2B, CSE4/CENPA and H4 assembled in one CSE4-H4 heterotetramer and two H2A-H2B heterodimers. Interacts with the inner kinetochore. Interacts with the central kinetochore protein CTF19. Interacts with YTA7. In terms of processing, ubiquitinated. Is degraded through ubiquitin-mediated proteolysis when not protected by its association to the kinetochore.

It localises to the nucleus. Its subcellular location is the chromosome. It is found in the centromere. Histone H3-like nucleosomal protein that is specifically found in centromeric nucleosomes. Replaces conventional H3 in the nucleosome core of centromeric chromatin that serves as an assembly site for the inner kinetochore. Required for recruitment and assembly of kinetochore proteins, mitotic progression and chromosome segregation. May serve as an epigenetic mark that propagates centromere identity through replication and cell division. Required for functional chromatin architecture at the yeast 2-micron circle partitioning locus and promotes equal plasmid segregation. This is Histone H3-like centromeric protein CSE4 (CSE4) from Saccharomyces cerevisiae (strain ATCC 204508 / S288c) (Baker's yeast).